The primary structure comprises 189 residues: Protein jagunal homolog (189 aa).

Topologically, residues 1-34 are cytoplasmic; that stretch reads MSSRGVRAAGTDGNDFQNRQRIAQHYQESAQYKS. The chain crosses the membrane as a helical span at residues 35 to 55; sequence VLKWFFVPHFLILVFMWLKVG. The Lumenal segment spans residues 56-75; the sequence is SEFLRYNFGWKNAFFERLDM. A helical transmembrane segment spans residues 76–96; it reads PAAYPWEYVWCLSFIPIVLAL. Residues 97–105 lie on the Cytoplasmic side of the membrane; that stretch reads SSFQRNKLK. Residues 106–126 traverse the membrane as a helical segment; the sequence is VLHYAYYAEFICGIFPCMIGL. Over 127–150 the chain is Lumenal; sequence GGQLPELLEYANDMEGSNTPTFKG. The chain crosses the membrane as a helical span at residues 151–171; it reads IFPMVIIWYIFFAVALQIHGF. At 172–189 the chain is on the cytoplasmic side; that stretch reads SMYFMHHLAAAWAPVKRD.

The protein belongs to the jagunal family.

The protein localises to the endoplasmic reticulum membrane. This is Protein jagunal homolog from Caenorhabditis briggsae.